The following is a 335-amino-acid chain: Biotin synthase (335 aa).

In terms of domain architecture, Radical SAM core spans 51–281; that stretch reads YRVQLASLLS…RSRVRLSAGR (231 aa). [4Fe-4S] cluster is bound by residues cysteine 66, cysteine 70, and cysteine 73. Residues cysteine 112, cysteine 144, cysteine 204, and arginine 276 each contribute to the [2Fe-2S] cluster site.

The protein belongs to the radical SAM superfamily. Biotin synthase family. Homodimer. [4Fe-4S] cluster is required as a cofactor. [2Fe-2S] cluster serves as cofactor.

It catalyses the reaction (4R,5S)-dethiobiotin + (sulfur carrier)-SH + 2 reduced [2Fe-2S]-[ferredoxin] + 2 S-adenosyl-L-methionine = (sulfur carrier)-H + biotin + 2 5'-deoxyadenosine + 2 L-methionine + 2 oxidized [2Fe-2S]-[ferredoxin]. The protein operates within cofactor biosynthesis; biotin biosynthesis; biotin from 7,8-diaminononanoate: step 2/2. Catalyzes the conversion of dethiobiotin (DTB) to biotin by the insertion of a sulfur atom into dethiobiotin via a radical-based mechanism. In Prochlorococcus marinus (strain MIT 9303), this protein is Biotin synthase.